Reading from the N-terminus, the 404-residue chain is 8-amino-7-oxononanoate synthase (404 aa).

Residue R20 participates in substrate binding. Pyridoxal 5'-phosphate is bound at residue 116–117 (GY). Position 141 (H141) interacts with substrate. Pyridoxal 5'-phosphate is bound by residues S187, H215, and T243. K246 carries the N6-(pyridoxal phosphate)lysine modification. T366 provides a ligand contact to substrate.

It belongs to the class-II pyridoxal-phosphate-dependent aminotransferase family. BioF subfamily. Homodimer. The cofactor is pyridoxal 5'-phosphate.

It catalyses the reaction 6-carboxyhexanoyl-[ACP] + L-alanine + H(+) = (8S)-8-amino-7-oxononanoate + holo-[ACP] + CO2. It participates in cofactor biosynthesis; biotin biosynthesis. Its function is as follows. Catalyzes the decarboxylative condensation of pimeloyl-[acyl-carrier protein] and L-alanine to produce 8-amino-7-oxononanoate (AON), [acyl-carrier protein], and carbon dioxide. The sequence is that of 8-amino-7-oxononanoate synthase from Cupriavidus necator (strain ATCC 17699 / DSM 428 / KCTC 22496 / NCIMB 10442 / H16 / Stanier 337) (Ralstonia eutropha).